We begin with the raw amino-acid sequence, 312 residues long: Taste receptor type 2 member 7 (312 aa).

Topologically, residues 1-9 (MTYETDTTL) are extracellular. Residues 10–30 (MFVAVCEALVGILGNAFIALV) form a helical membrane-spanning segment. The Cytoplasmic portion of the chain corresponds to 31–49 (NFMGWMKNRKITAIDLILS). A helical membrane pass occupies residues 50 to 70 (SLAMSRICLQCIILLDCIILV). Residues 71–101 (QYPDTYNRGKEMRIIDFFWTLTNHLSVWFAT) lie on the Extracellular side of the membrane. Residues 102–122 (CLSIFYFFKIANFFHPLFLWI) traverse the membrane as a helical segment. Topologically, residues 123–128 (KWRIDK) are cytoplasmic. Residues 129-149 (LILRTLLACLILSLCFSLPVT) form a helical membrane-spanning segment. Over 150–187 (ENLTDDFRRCVKTKERINSTLRCKLNKAGYASVKVNLN) the chain is Extracellular. N-linked (GlcNAc...) asparagine glycans are attached at residues Asn-151 and Asn-167. The helical transmembrane segment at 188–208 (LVMLFPFSVSLVSFLLLILSL) threads the bilayer. The Cytoplasmic portion of the chain corresponds to 209–235 (WRHTRQMQLNVTGYNDPSTTAHVKATK). The chain crosses the membrane as a helical span at residues 236–256 (AVISFLVLFIVYCLAFLIATS). The Extracellular portion of the chain corresponds to 257–266 (SYFMPESELA). The helical transmembrane segment at 267–287 (VIWGELIALIYPSSHSFILIL) threads the bilayer. The Cytoplasmic portion of the chain corresponds to 288-312 (GNSKLKQASVRVLCRVKTMLKGRKY).

Belongs to the G-protein coupled receptor T2R family. Expressed in subsets of taste receptor cells of the tongue and palate epithelium and exclusively in gustducin-positive cells. Expressed in 15% taste bud cells in circumvallate and foliate papillae but only in 2% in fungiform papillae. Expressed in the duodenum, antrum and fundus (part of the stomach) and in gastric endocrine cells.

It localises to the membrane. Functionally, gustducin-coupled receptor implicated in the perception of bitter compounds in the oral cavity and the gastrointestinal tract. Signals through PLCB2 and the calcium-regulated cation channel TRPM5. In Rattus norvegicus (Rat), this protein is Taste receptor type 2 member 7 (Tas2r7).